The sequence spans 167 residues: MRVEVGQIVNTHGIKGEIKVKSNSDFTDVRFQPGQVLTVVHNNNDLEYTVKSHRVHKGLHMLTFEGINNINDIEHLKGSSIYQERDHEDIVLEENEFYYSDIIGCAVFDDQKTPIGRVINIFETGANDVWVIKGSKEYLIPYIADVVKEVDVENKKIIITPMEGLLD.

Residues 94–165 enclose the PRC barrel domain; sequence ENEFYYSDII…KIIITPMEGL (72 aa).

The protein belongs to the RimM family. Binds ribosomal protein uS19.

Its subcellular location is the cytoplasm. An accessory protein needed during the final step in the assembly of 30S ribosomal subunit, possibly for assembly of the head region. Essential for efficient processing of 16S rRNA. May be needed both before and after RbfA during the maturation of 16S rRNA. It has affinity for free ribosomal 30S subunits but not for 70S ribosomes. This chain is Ribosome maturation factor RimM, found in Staphylococcus aureus (strain NCTC 8325 / PS 47).